Consider the following 200-residue polypeptide: Cleavage and polyadenylation specificity factor subunit 5 (200 aa).

Residues 45–170 (LRKAVEGIII…LSLIAVSLYE (126 aa)) form the Nudix hydrolase domain. The segment at 70–72 (NYF) is interaction with RNA. A Nudix box motif is present at residues 77–98 (GKLKPGENEIDGLIRKLTKKLS).

Belongs to the Nudix hydrolase family. CPSF5 subfamily. Homodimer (via N- and C-terminus); binds RNA as homodimer. Component of the cleavage factor Im (CFIm) complex.

Its subcellular location is the nucleus. The protein resides in the cytoplasm. Functionally, component of the cleavage factor Im (CFIm) complex that functions as an activator of the pre-mRNA 3'-end cleavage and polyadenylation processing required for the maturation of pre-mRNA into functional mRNAs. CFIm contributes to the recruitment of multiprotein complexes on specific sequences on the pre-mRNA 3'-end, so called cleavage and polyadenylation signals (pA signals). Most pre-mRNAs contain multiple pA signals, resulting in alternative cleavage and polyadenylation (APA) producing mRNAs with variable 3'-end formation. The CFIm complex acts as a key regulator of cleavage and polyadenylation site choice during APA through its binding to 5'-UGUA-3' elements localized in the 3'-untranslated region (UTR) for a huge number of pre-mRNAs. Binds to 5'-UGUA-3' elements localized upstream of pA signals that act as enhancers of pre-mRNA 3'-end processing. The homodimer mediates simultaneous sequence-specific recognition of two 5'-UGUA-3' elements within the pre-mRNA. Plays a role in somatic cell fate transitions and pluripotency by regulating widespread changes in gene expression through an APA-dependent function. Binds to chromatin. The sequence is that of Cleavage and polyadenylation specificity factor subunit 5 from Dictyostelium discoideum (Social amoeba).